The primary structure comprises 144 residues: MKNFALAILVVTFVVAVFGNTNLDPPTRPTRLRREAEPEAEPGNNRPVYIPQPRPPHPRLRREAEPEAEPGNNRPVYIPQPRPPHPRLRREAEPEAEPGNNRPVYIPQPRPPHPRLRREAEPEAEPGNNRPVYIPQPRPPHPRI.

Positions 1–19 (MKNFALAILVVTFVVAVFG) are cleaved as a signal peptide. 4 propeptides span residues 20 to 42 (NTNLDPPTRPTRLRREAEPEAEP), 63 to 70 (EAEPEAEP), 91 to 98 (EAEPEAEP), and 119 to 126 (EAEPEAEP). The disordered stretch occupies residues 20–144 (NTNLDPPTRP…PQPRPPHPRI (125 aa)). Over residues 134–144 (IPQPRPPHPRI) the composition is skewed to pro residues.

The protein belongs to the apidaecin family.

It is found in the secreted. Apidaecins have bactericidal activity; predominantly against Gram-negative bacteria. They seem to interfere with cell propagation. This chain is Apidaecins type 22, found in Apis mellifera (Honeybee).